Consider the following 248-residue polypeptide: Mannose-binding protein C (248 aa).

An N-terminal signal peptide occupies residues 1–20 (MSLFPSLTLLLLSVVATSYS). Residues 42-99 (GINGFPGKDGRDGTKGEKGEPGQGLRGLQGPPGKLGPPGNPGSSGSPGPKGQKGDPGE) enclose the Collagen-like domain. Positions 43–111 (INGFPGKDGR…DCESSLAASE (69 aa)) are disordered. 4-hydroxyproline is present on Pro-47. Over residues 49 to 61 (KDGRDGTKGEKGE) the composition is skewed to basic and acidic residues. Pro-73, Pro-79, Pro-82, and Pro-88 each carry 4-hydroxyproline. The span at 82–91 (PGSSGSPGPK) shows a compositional bias: low complexity. Positions 112–130 (RKALQTEMARIKKWLTFSL) form a coiled coil. The 112-residue stretch at 134-245 (VGNKFFLTNG…CSSSHLALCE (112 aa)) folds into the C-type lectin domain. Intrachain disulfides connect Cys-155-Cys-244 and Cys-222-Cys-236.

As to quaternary structure, oligomeric complex of 3 or more homotrimers. Interacts with MASP1 and MASP2. Interacts with MEP1A and MEP1B and may inhibit their catalytic activity. Post-translationally, hydroxylation on proline residues within the sequence motif, GXPG, is most likely to be 4-hydroxy as this fits the requirement for 4-hydroxylation in vertebrates.

It localises to the secreted. Its function is as follows. Calcium-dependent lectin involved in innate immune defense. Binds mannose, fucose and N-acetylglucosamine on different microorganisms and activates the lectin complement pathway. Binds to late apoptotic cells, as well as to apoptotic blebs and to necrotic cells, but not to early apoptotic cells, facilitating their uptake by macrophages. The polypeptide is Mannose-binding protein C (MBL2) (Macaca fascicularis (Crab-eating macaque)).